We begin with the raw amino-acid sequence, 434 residues long: UDP-N-acetylmuramoylalanine--D-glutamate ligase (434 aa).

Residue 113-119 (GSNGKST) participates in ATP binding.

It belongs to the MurCDEF family.

It localises to the cytoplasm. The catalysed reaction is UDP-N-acetyl-alpha-D-muramoyl-L-alanine + D-glutamate + ATP = UDP-N-acetyl-alpha-D-muramoyl-L-alanyl-D-glutamate + ADP + phosphate + H(+). Its pathway is cell wall biogenesis; peptidoglycan biosynthesis. Cell wall formation. Catalyzes the addition of glutamate to the nucleotide precursor UDP-N-acetylmuramoyl-L-alanine (UMA). In Pasteurella multocida (strain Pm70), this protein is UDP-N-acetylmuramoylalanine--D-glutamate ligase.